A 169-amino-acid chain; its full sequence is Der GTPase-activating protein YihI (169 aa).

Disordered regions lie at residues 1 to 98 (MKPS…PQAE) and 144 to 169 (GLSYDDDEEEEEDEKQEDMMRLLRGN). Residues 10–19 (SKGHAKARRK) show a composition bias toward basic residues. Positions 20–30 (TREELDQEARD) are enriched in basic and acidic residues. Basic residues predominate over residues 31–40 (RKRQKKRRGH). The segment covering 49–58 (GNTTSGSKGQ) has biased composition (polar residues). A compositionally biased stretch (acidic residues) spans 147–159 (YDDDEEEEEDEKQ). Residues 160 to 169 (EDMMRLLRGN) show a composition bias toward basic and acidic residues.

This sequence belongs to the YihI family. Interacts with Der.

Its function is as follows. A GTPase-activating protein (GAP) that modifies Der/EngA GTPase function. May play a role in ribosome biogenesis. The chain is Der GTPase-activating protein YihI from Escherichia coli O139:H28 (strain E24377A / ETEC).